We begin with the raw amino-acid sequence, 238 residues long: Cysteine-rich venom protein pseudechetoxin-like (238 aa).

Residues 1 to 19 form the signal peptide; sequence MIAFLVLLSLAAVLQQSSG. The propeptide occupies 20–28; sequence TVDFASESS. Residues 38 to 164 form the SCP domain; sequence VDKHNDLRRS…STKYLYVCQY (127 aa). Cystine bridges form between Cys75-Cys153, Cys92-Cys165, Cys148-Cys162, Cys184-Cys191, Cys187-Cys196, Cys200-Cys233, Cys209-Cys227, and Cys218-Cys231. The 34-residue stretch at 200 to 233 folds into the ShKT domain; it reads CKHNDDLSNCKTLVKKHKCQTEWIKSKCPATCFC.

The protein belongs to the CRISP family. Expressed by the venom gland.

The protein localises to the secreted. In terms of biological role, blocks olfactory (CNGA2) and retinal (CNGA1) CNG channel currents. Does not affect neither depolarization- nor caffeine-induced contraction of smooth muscle. The protein is Cysteine-rich venom protein pseudechetoxin-like of Pseudonaja textilis (Eastern brown snake).